The following is a 200-amino-acid chain: UPF0637 protein LCK_01372 (200 aa).

This sequence belongs to the UPF0637 family.

The protein is UPF0637 protein LCK_01372 of Leuconostoc citreum (strain KM20).